The following is a 644-amino-acid chain: Pesticidal crystal protein Cry3Aa (644 aa).

A compositionally biased stretch (basic and acidic residues) spans 1-13 (MNPNNRSEHDTIK). A disordered region spans residues 1–20 (MNPNNRSEHDTIKTTENNEV). Residues 1 to 57 (MNPNNRSEHDTIKTTENNEVPTNHVQYPLAETPNPTLEDLNYKEFLRMTADNNTEAL) constitute a propeptide, removed in mature form.

It belongs to the delta endotoxin family.

Promotes colloidosmotic lysis by binding to the midgut epithelial cells of Coleoptera. This chain is Pesticidal crystal protein Cry3Aa (cry3Aa), found in Bacillus thuringiensis subsp. san diego.